We begin with the raw amino-acid sequence, 590 residues long: UvrABC system protein C (590 aa).

A GIY-YIG domain is found at 11-85; that stretch reads ETPGVYLWKR…IKAHRPLYNV (75 aa). In terms of domain architecture, UVR spans 194–229; that stretch reads DGLLQELEAKMREAARRLEFERAAEIRDQMEALRAF.

Belongs to the UvrC family. In terms of assembly, interacts with UvrB in an incision complex.

Its subcellular location is the cytoplasm. In terms of biological role, the UvrABC repair system catalyzes the recognition and processing of DNA lesions. UvrC both incises the 5' and 3' sides of the lesion. The N-terminal half is responsible for the 3' incision and the C-terminal half is responsible for the 5' incision. This Thermus thermophilus (strain ATCC 27634 / DSM 579 / HB8) protein is UvrABC system protein C.